Consider the following 444-residue polypeptide: Glutamyl-tRNA(Gln) amidotransferase subunit D (444 aa).

The Asparaginase/glutaminase domain maps to 92–424 (SEIKIISTGG…EKIQNLMITN (333 aa)). Residues T102, T178, D179, and K257 contribute to the active site.

This sequence belongs to the asparaginase 1 family. GatD subfamily. In terms of assembly, heterodimer of GatD and GatE.

It catalyses the reaction L-glutamyl-tRNA(Gln) + L-glutamine + ATP + H2O = L-glutaminyl-tRNA(Gln) + L-glutamate + ADP + phosphate + H(+). Functionally, allows the formation of correctly charged Gln-tRNA(Gln) through the transamidation of misacylated Glu-tRNA(Gln) in organisms which lack glutaminyl-tRNA synthetase. The reaction takes place in the presence of glutamine and ATP through an activated gamma-phospho-Glu-tRNA(Gln). The GatDE system is specific for glutamate and does not act on aspartate. This Saccharolobus solfataricus (strain ATCC 35092 / DSM 1617 / JCM 11322 / P2) (Sulfolobus solfataricus) protein is Glutamyl-tRNA(Gln) amidotransferase subunit D.